A 632-amino-acid polypeptide reads, in one-letter code: Threonine--tRNA ligase (632 aa).

Residues 1-61 (MPIVTLPDGS…EHDAEVSILT (61 aa)) enclose the TGS domain. Residues 242-533 (DHRKLARKLD…LIEHYAGSMP (292 aa)) are catalytic. Zn(2+)-binding residues include Cys-333, His-384, and His-510.

This sequence belongs to the class-II aminoacyl-tRNA synthetase family. Homodimer. Zn(2+) serves as cofactor.

The protein localises to the cytoplasm. It catalyses the reaction tRNA(Thr) + L-threonine + ATP = L-threonyl-tRNA(Thr) + AMP + diphosphate + H(+). Functionally, catalyzes the attachment of threonine to tRNA(Thr) in a two-step reaction: L-threonine is first activated by ATP to form Thr-AMP and then transferred to the acceptor end of tRNA(Thr). Also edits incorrectly charged L-seryl-tRNA(Thr). In Chromohalobacter salexigens (strain ATCC BAA-138 / DSM 3043 / CIP 106854 / NCIMB 13768 / 1H11), this protein is Threonine--tRNA ligase.